We begin with the raw amino-acid sequence, 560 residues long: Protein yellow (560 aa).

A signal peptide spans 1–30 (MHVQDKGGIGALTALSLLLVAVTMVTPTQA). 2 N-linked (GlcNAc...) asparagine glycosylation sites follow: N153 and N224. The tract at residues 452–492 (QYRPVLPQKPQTSWGPSPPSRSYLPSLGASPGGPGQVVSSV) is disordered. Residues 471–480 (SRSYLPSLGA) are compositionally biased toward low complexity.

The protein belongs to the major royal jelly protein family.

The protein resides in the secreted. In terms of biological role, controls the pigmentation pattern of the adult cuticle and larval mouth parts. The sequence is that of Protein yellow (y) from Drosophila pseudoobscura pseudoobscura (Fruit fly).